The following is a 311-amino-acid chain: Ribosomal RNA small subunit methyltransferase H (311 aa).

Residues 35–37 (GGH), Asp55, Phe80, Asp102, and Gln109 contribute to the S-adenosyl-L-methionine site.

Belongs to the methyltransferase superfamily. RsmH family.

It localises to the cytoplasm. The catalysed reaction is cytidine(1402) in 16S rRNA + S-adenosyl-L-methionine = N(4)-methylcytidine(1402) in 16S rRNA + S-adenosyl-L-homocysteine + H(+). Specifically methylates the N4 position of cytidine in position 1402 (C1402) of 16S rRNA. The sequence is that of Ribosomal RNA small subunit methyltransferase H from Pseudoalteromonas atlantica (strain T6c / ATCC BAA-1087).